The primary structure comprises 477 residues: MTDWPVYHRIDGPIVMIGFGSIGRGTLPLIERHFAFDRSKLVVIDPSDEARKLAEARGVRFIQQAVTRDNYRELLVPLLTAGPGQGFCVNLSVDTSSLDIMELARENGALYIDTVVEPWLGFYFDPDLKPEARSNYALRETVLAARRNKPGGTTAVSCCGANPGMVSWFVKQALVNLAADLGVTGEEPTTREEWARLAMDLGVKGIHIAERDTQRASFPKPFDVFVNTWSVEGFVSEGLQPAELGWGTFERWMPDNARGHDSGCGAGIYLLQPGANTRVRSWTPTAMAQYGFLVTHNESISIADFLTVRDAAGQAVYRPTCHYAYHPCNDAVLSLHEMFGSGKRQSDWRILDETEIVDGIDELGVLLYGHGKNAYWYGSQLSIEETRRIAPDQNATGLQVSSAVLAGMVWALENPNAGIVEADDLDFRRCLEVQTPYLGPVVGVYTDWTPLAGRPGLFPEDIDTSDPWQFRNVLVRD.

The protein belongs to the saccharopine dehydrogenase family. In terms of assembly, homodimer. It depends on NAD(+) as a cofactor.

The catalysed reaction is 2 putrescine = sym-homospermidine + NH4(+). It catalyses the reaction putrescine + spermidine = sym-homospermidine + propane-1,3-diamine. Involved in the NAD(+)-dependent synthesis of the polyamine homospermidine from putrescine. This is Homospermidine synthase (hss) from Blastochloris viridis (Rhodopseudomonas viridis).